Here is a 114-residue protein sequence, read N- to C-terminus: UPF0473 protein OEOE_1164 (114 aa).

The protein belongs to the UPF0473 family.

This Oenococcus oeni (strain ATCC BAA-331 / PSU-1) protein is UPF0473 protein OEOE_1164.